We begin with the raw amino-acid sequence, 231 residues long: Ureidoacrylate amidohydrolase RutB (231 aa).

Aspartate 25 (proton acceptor) is an active-site residue. Lysine 134 is an active-site residue. Cysteine 167 acts as the Nucleophile in catalysis.

This sequence belongs to the isochorismatase family. RutB subfamily.

It catalyses the reaction (Z)-3-ureidoacrylate + H2O + H(+) = (Z)-3-aminoacrylate + NH4(+) + CO2. The enzyme catalyses (Z)-3-ureidoacrylate + H2O = (Z)-3-aminoacrylate + carbamate + H(+). It carries out the reaction (Z)-2-methylureidoacrylate + H2O + H(+) = (Z)-2-methylaminoacrylate + NH4(+) + CO2. Hydrolyzes ureidoacrylate to form aminoacrylate and carbamate. The carbamate hydrolyzes spontaneously, thereby releasing one of the nitrogen atoms of the pyrimidine ring as ammonia and one of its carbon atoms as CO2. The polypeptide is Ureidoacrylate amidohydrolase RutB (Escherichia coli O9:H4 (strain HS)).